Consider the following 692-residue polypeptide: Elongation factor G (692 aa).

In terms of domain architecture, tr-type G spans 8–282; sequence EKTRNIGIMA…AVLDYLPAPT (275 aa). GTP-binding positions include 17 to 24, 81 to 85, and 135 to 138; these read AHIDAGKT, DTPGH, and NKMD.

This sequence belongs to the TRAFAC class translation factor GTPase superfamily. Classic translation factor GTPase family. EF-G/EF-2 subfamily.

The protein localises to the cytoplasm. Its function is as follows. Catalyzes the GTP-dependent ribosomal translocation step during translation elongation. During this step, the ribosome changes from the pre-translocational (PRE) to the post-translocational (POST) state as the newly formed A-site-bound peptidyl-tRNA and P-site-bound deacylated tRNA move to the P and E sites, respectively. Catalyzes the coordinated movement of the two tRNA molecules, the mRNA and conformational changes in the ribosome. The sequence is that of Elongation factor G from Bacillus velezensis (strain DSM 23117 / BGSC 10A6 / LMG 26770 / FZB42) (Bacillus amyloliquefaciens subsp. plantarum).